Consider the following 54-residue polypeptide: Ovomucoid (54 aa).

Residues 4–54 (VDCSDYPKPACRMEYMPLCGSDNKTYGNKCNFCNAVVDSNGTLTLSHFGKC) form the Kazal-like domain. 3 disulfide bridges follow: Cys-6-Cys-36, Cys-14-Cys-33, and Cys-22-Cys-54. N-linked (GlcNAc...) asparagine glycosylation is present at Asn-43.

The protein resides in the secreted. The chain is Ovomucoid from Cereopsis novaehollandiae (Cape Barren goose).